The chain runs to 212 residues: Probable GTP-binding protein EngB (212 aa).

The 173-residue stretch at 38-210 (SLPEIAFVGK…KASLAKCIKP (173 aa)) folds into the EngB-type G domain. Residues 46-53 (GKSNVGKS), 73-77 (GRTRQ), 91-94 (DLPG), 158-161 (TKSD), and 189-191 (VSN) contribute to the GTP site. Positions 53 and 75 each coordinate Mg(2+).

Belongs to the TRAFAC class TrmE-Era-EngA-EngB-Septin-like GTPase superfamily. EngB GTPase family. Mg(2+) is required as a cofactor.

Functionally, necessary for normal cell division and for the maintenance of normal septation. The protein is Probable GTP-binding protein EngB of Rickettsia africae (strain ESF-5).